The primary structure comprises 492 residues: GMP reductase (492 aa).

Residues 30–31 (SR) and Arg78 each bind NADP(+). 2 CBS domains span residues 99 to 162 (LIED…LVET) and 164 to 223 (MTPV…LNAT). Residues 260–262 (DIA) and 313–314 (VG) contribute to the NADP(+) site. Residues Gly314, Gly316, and Cys319 each coordinate K(+). Cys319 (thioimidate intermediate) is an active-site residue. Residue Thr321 is the Proton donor/acceptor of the active site. Residue Arg322 coordinates K(+). GMP-binding positions include 352–354 (DGG), 375–376 (GN), and 401–403 (GMA). Residues Met402 and 454 to 457 (SGIS) contribute to the NADP(+) site. The Microbody targeting signal signature appears at 490–492 (SKL).

It belongs to the IMPDH/GMPR family. GuaC type 1 subfamily. In terms of assembly, homotetramer.

It is found in the glycosome. The catalysed reaction is IMP + NH4(+) + NADP(+) = GMP + NADPH + 2 H(+). Its activity is regulated as follows. Activated by GTP and inhibited by ATP and IMP. Mycophenolic acid (MPA) is a competitive inhibitor of the enzyme with respect to NADPH. Functionally, catalyzes the irreversible NADPH-dependent deamination of GMP to IMP. It functions in the conversion of nucleobase, nucleoside and nucleotide derivatives of G to A nucleotides, and in maintaining the intracellular balance of A and G nucleotides. The sequence is that of GMP reductase from Leishmania major.